The sequence spans 185 residues: Bacteriocin UviA (185 aa).

Its function is as follows. May have a role in bacteriocin secretion or immunity. The chain is Bacteriocin UviA (uviA) from Clostridium perfringens.